The primary structure comprises 391 residues: Thyroid hormone receptor alpha-B (391 aa).

Residues 1–32 form a modulating region; it reads MAQWPEKEEEEQPMFGEEYTGYIPSYLEKDEP. NR C4-type zinc fingers lie at residues 33-53 and 71-95; these read CVVC…CEGC and CKYD…FKKC. Residues 33–100 constitute a DNA-binding region (nuclear receptor); it reads CVVCGDKATG…RFKKCIAVGM (68 aa). Residues 143–388 form the NR LBD domain; it reads AEWELIRMVT…PPLFLEVFED (246 aa).

It belongs to the nuclear hormone receptor family. NR1 subfamily.

The protein resides in the nucleus. Its function is as follows. High affinity receptor for triiodothyronine. This chain is Thyroid hormone receptor alpha-B (thra2), found in Paralichthys olivaceus (Bastard halibut).